Reading from the N-terminus, the 481-residue chain is Aspartyl/glutamyl-tRNA(Asn/Gln) amidotransferase subunit B (481 aa).

The protein belongs to the GatB/GatE family. GatB subfamily. As to quaternary structure, heterotrimer of A, B and C subunits.

The catalysed reaction is L-glutamyl-tRNA(Gln) + L-glutamine + ATP + H2O = L-glutaminyl-tRNA(Gln) + L-glutamate + ADP + phosphate + H(+). It carries out the reaction L-aspartyl-tRNA(Asn) + L-glutamine + ATP + H2O = L-asparaginyl-tRNA(Asn) + L-glutamate + ADP + phosphate + 2 H(+). In terms of biological role, allows the formation of correctly charged Asn-tRNA(Asn) or Gln-tRNA(Gln) through the transamidation of misacylated Asp-tRNA(Asn) or Glu-tRNA(Gln) in organisms which lack either or both of asparaginyl-tRNA or glutaminyl-tRNA synthetases. The reaction takes place in the presence of glutamine and ATP through an activated phospho-Asp-tRNA(Asn) or phospho-Glu-tRNA(Gln). The polypeptide is Aspartyl/glutamyl-tRNA(Asn/Gln) amidotransferase subunit B (Pseudomonas syringae pv. syringae (strain B728a)).